Consider the following 400-residue polypeptide: Acetate kinase (400 aa).

Residue Asn10 coordinates Mg(2+). Lys17 lines the ATP pocket. Position 91 (Arg91) interacts with substrate. The Proton donor/acceptor role is filled by Asp150. Residues 210 to 214 (HLGSG), 285 to 287 (DCR), and 333 to 337 (GIGEN) contribute to the ATP site. Glu387 contacts Mg(2+).

It belongs to the acetokinase family. Homodimer. Mg(2+) serves as cofactor. It depends on Mn(2+) as a cofactor.

It is found in the cytoplasm. It catalyses the reaction acetate + ATP = acetyl phosphate + ADP. It participates in metabolic intermediate biosynthesis; acetyl-CoA biosynthesis; acetyl-CoA from acetate: step 1/2. Its function is as follows. Catalyzes the formation of acetyl phosphate from acetate and ATP. Can also catalyze the reverse reaction. In Baumannia cicadellinicola subsp. Homalodisca coagulata, this protein is Acetate kinase.